A 792-amino-acid chain; its full sequence is Phosphoenolpyruvate synthase (792 aa).

H421 acts as the Tele-phosphohistidine intermediate in catalysis. Substrate-binding residues include R511, R578, E680, G701, S702, N703, and D704. Residue E680 participates in Mg(2+) binding. A Mg(2+)-binding site is contributed by D704. C751 (proton donor) is an active-site residue.

This sequence belongs to the PEP-utilizing enzyme family. In terms of assembly, homodimer. Mg(2+) is required as a cofactor.

The enzyme catalyses pyruvate + ATP + H2O = phosphoenolpyruvate + AMP + phosphate + 2 H(+). It participates in carbohydrate biosynthesis; gluconeogenesis. Activated by a Pi-dependent pyrophosphorylation and inactivated by an ADP-dependent phosphorylation on a regulatory threonine. Both reactions are mediated by the bifunctional serine/threonine kinase and phosphorylase PpsR. Catalyzes the phosphorylation of pyruvate to phosphoenolpyruvate. In Escherichia coli (strain K12), this protein is Phosphoenolpyruvate synthase (ppsA).